We begin with the raw amino-acid sequence, 95 residues long: RING finger protein Z (95 aa).

Residue Gly2 is the site of N-myristoyl glycine; by host attachment. An RING-type; atypical zinc finger spans residues 38–74; sequence CKSCWFANRGLIACSDHYLCLNCLTRLRSQSQFCGIC. The short motif at 88–91 is the PTAP/PSAP motif element; it reads PSAP.

The protein belongs to the arenaviridae Z protein family. In terms of assembly, interacts with protein NP; this interaction probably directs the encapsidated genome to budding sites. Interacts (via RING domain) with polymerase L; this interaction inhibits viral transcription and replication, Z partially blocks the product exit tunnel for the releasing nascent RNA product. Interacts with the glycoprotein complex; this interaction plays a role in virion budding. Interacts with host eIF4E; this interaction results in eIF4E reduced affinity for its substrate, the 5'-m7 G cap structure. Interacts (via late-budding domain) with host TSG101; this interaction is essential for budding and release of viral particles. Interacts with host RPLP0; this interaction may serve to load ribosome-like particles inside the virion. Interacts with host PML; this interaction induces PML bodies redistribution in the cytoplasm upon viral infection. Myristoylation is required for the role of RING finger protein Z in assembly and budding.

The protein localises to the virion. Its subcellular location is the host cytoplasm. It localises to the host perinuclear region. The protein resides in the host cell membrane. Plays a crucial role in virion assembly and budding. Expressed late in the virus life cycle, it acts as an inhibitor of viral transcription and RNA synthesis by interacting with the viral polymerase L. Presumably recruits the NP encapsidated genome to cellular membranes at budding sites via direct interaction with NP. Plays critical roles in the final steps of viral release by interacting with host TSG101, a member of the vacuolar protein-sorting pathway and using other cellular host proteins involved in vesicle formation pathway. The budding of the virus progeny occurs after association of protein Z with the viral glycoprotein complex SSP-GP1-GP2 at the cell periphery, step that requires myristoylation of protein Z. Also selectively represses protein production by associating with host eIF4E. In cell-based minigenome assay, has an inhibitory effect on the ribonucleoprotein machinery (vRNP), which is responsible for the replication and transcription of the viral genome. This is RING finger protein Z from Pirital mammarenavirus (isolate Rat/Venezuela/VAV-488/1995) (PIRV).